Here is a 369-residue protein sequence, read N- to C-terminus: Protein V (369 aa).

2 disordered regions span residues 1 to 24 (MDQD…GRES) and 38 to 320 (SEPT…GHRR). Positions 7 to 20 (ISKEDSEVEREASG) are enriched in basic and acidic residues. Polar residues predominate over residues 50–61 (LHNTINTLQRPG). Basic and acidic residues-rich tracts occupy residues 99-110 (AEAHARNVDKQN) and 150-168 (GAED…RGED). 3 positions are modified to phosphoserine; by host: Ser249, Ser257, and Ser260. Zn(2+) is bound by residues His318, Cys337, Cys341, Cys353, Cys355, Cys358, Cys362, and Cys365.

It belongs to the paramyxoviruses V protein family. In terms of assembly, interacts with host IFIH1/MDA5 and DHX58/LGP2. Interacts with host IRF3. Interacts with host RIGI regulatory protein (via CARDs domain) and host TRIM25 (via SPRY domain); these interactions prevent TRIM25-mediated ubiquitination of RIG-I and disrupts downstream RIG-I signaling.

Its subcellular location is the host cytoplasm. Its function is as follows. Plays an essential role in the inhibition of host immune response. Prevents the establishment of cellular antiviral state by blocking interferon-alpha/beta (IFN-alpha/beta) production and signaling pathway. Interacts with host IFIH1/MDA5 and DHX58/LGP2 to inhibit the transduction pathway involved in the activation of IFN-beta promoter, thus protecting the virus against cell antiviral state. Also interacts with and inhibits host IRF3. Blocks the type I interferon signaling pathway by disrupting the RIG-I signaling pathway. In Sendai virus (strain Hamamatsu) (SeV), this protein is Protein V (P/V/C).